Here is a 339-residue protein sequence, read N- to C-terminus: Ketol-acid reductoisomerase (NADP(+)) (339 aa).

Residues 1–182 (MRVYYDRDAD…GGGRSGVIET (182 aa)) form the KARI N-terminal Rossmann domain. Residues 24 to 27 (YGSQ), Arg-48, Ser-51, Thr-53, and 83 to 86 (DEHQ) contribute to the NADP(+) site. His-108 is a catalytic residue. Residue Gly-134 participates in NADP(+) binding. Residues 183-328 (TFKEECETDL…AELRAMMPWI (146 aa)) form the KARI C-terminal knotted domain. 4 residues coordinate Mg(2+): Asp-191, Glu-195, Glu-227, and Glu-231. Ser-252 is a substrate binding site.

The protein belongs to the ketol-acid reductoisomerase family. Mg(2+) serves as cofactor.

The enzyme catalyses (2R)-2,3-dihydroxy-3-methylbutanoate + NADP(+) = (2S)-2-acetolactate + NADPH + H(+). It carries out the reaction (2R,3R)-2,3-dihydroxy-3-methylpentanoate + NADP(+) = (S)-2-ethyl-2-hydroxy-3-oxobutanoate + NADPH + H(+). It functions in the pathway amino-acid biosynthesis; L-isoleucine biosynthesis; L-isoleucine from 2-oxobutanoate: step 2/4. It participates in amino-acid biosynthesis; L-valine biosynthesis; L-valine from pyruvate: step 2/4. Involved in the biosynthesis of branched-chain amino acids (BCAA). Catalyzes an alkyl-migration followed by a ketol-acid reduction of (S)-2-acetolactate (S2AL) to yield (R)-2,3-dihydroxy-isovalerate. In the isomerase reaction, S2AL is rearranged via a Mg-dependent methyl migration to produce 3-hydroxy-3-methyl-2-ketobutyrate (HMKB). In the reductase reaction, this 2-ketoacid undergoes a metal-dependent reduction by NADPH to yield (R)-2,3-dihydroxy-isovalerate. The protein is Ketol-acid reductoisomerase (NADP(+)) of Rhizorhabdus wittichii (strain DSM 6014 / CCUG 31198 / JCM 15750 / NBRC 105917 / EY 4224 / RW1) (Sphingomonas wittichii).